Consider the following 3295-residue polypeptide: Toxin CdiA (3295 aa).

Residues 33–366 (PSSGVGHTQR…GKGNTQLTTA (334 aa)) form a two-partner system transport domain (TPS) region. Residues 55–75 (LLIALGCISLSAQAAIVADGS) traverse the membrane as a helical segment. Residues 353 to 1574 (GVLYGKGNTQ…LLVYAKTLTN (1222 aa)) are FHA-1. Positions 1165–1185 (PPSSIPPSSTQSSSTQASASP) are disordered. The interval 1575-1796 (RRQILTATTD…LKTDKGDYAP (222 aa)) is receptor binding domain (RBD). The segment at 1797 to 1977 (GPEAALSLAN…GVKPGDLRAN (181 aa)) is YP domain. The tract at residues 1806–1831 (NISPPSSLDATGPRGVPPPSDDLNRT) is disordered. Residues 1998–2035 (GAISASNNLQISMAKDITLNNRCGLLQAGNHLQLSTLN) are periplasmic FHA-1 repeat (pFR). The interval 2022 to 2676 (LLQAGNHLQL…DRDNYDAKQS (655 aa)) is FHA-2. Disordered stretches follow at residues 2260–2292 (TSQT…EGRS) and 2823–2847 (QQNV…FDKE). Over residues 2823-2838 (QQNVDDLSRDTGNANG) the composition is skewed to polar residues. The short motif at 3073-3076 (VENN) is the VENN CT cleavage motif element. The tract at residues 3073–3295 (VENNLLGGNE…QKKDAMEDSK (223 aa)) is CT domain. Residues 3276–3295 (SSEFGSSLIQQKKDAMEDSK) are disordered. A compositionally biased stretch (basic and acidic residues) spans 3286–3295 (QKKDAMEDSK).

In the N-terminal section; belongs to the CdiA toxin family. Probably interacts with cognate immunity protein CdiI.

Its subcellular location is the membrane. It is found in the target cell. The protein resides in the target cell cytoplasm. In terms of biological role, toxic component of a toxin-immunity protein module, which functions as a cellular contact-dependent growth inhibition (CDI) system. CDI modules allow bacteria to communicate with and inhibit the growth of closely related neighboring bacteria in a contact-dependent fashion. CDI is neutralized by its cognate immunity protein CdiI, but not by non-cognate CdiI from other bacteria. Its function is as follows. The CdiA protein is thought to be exported from the cell through the central lumen of CdiB, the other half of its two-partner system (TPS). The TPS domain probably remains associated with CdiB while the FHA-1 domain forms an extended filament with the receptor-binding domain (RBD) at its extremity; in the secretion arrested state the C-terminus of the RBD and YP domains form a hairpin-like structure as the FHA-2, PT and CT domains are periplasmic. The YP domain is probably responsible for this arrest at the point where it re-enters the host cell periplasm. Upon binding to a target cell outer membrane receptor a signal is transmitted to activate secretion. The filament elongates slightly, the rest of CdiA is secreted and the FHA-2 domain becomes stably associated with the target cell's outer membrane where it facilitates entry of the toxic CT domain into the target cell periplasm. From there the toxic CT domain is cleaved and gains access to the target cell cytoplasm via an inner membrane protein. This chain is Toxin CdiA, found in Yersinia pestis.